The sequence spans 423 residues: T-box transcription factor T-A (423 aa).

The T-box DNA-binding region spans 44–212; sequence LWTKFKELTN…HNPFAKAFLD (169 aa). Over residues 215–227 the composition is skewed to basic and acidic residues; it reads ERSDHKEVPDHST. Disordered regions lie at residues 215 to 234 and 280 to 304; these read ERSD…QSGY and AAPY…SSGS. The segment covering 290–304 has biased composition (polar residues); sequence RSTTTNNYMDNSSGS.

As to quaternary structure, monomer. Binds DNA as a monomer. In terms of tissue distribution, first expressed at the dorsal side of the blastula embryo. Expressed in the germ ring, shield and chordamesoderm during gastrulation and is restricted to the notochord and tailbud during somitogenesis (at protein level).

It localises to the nucleus. Involved in the transcriptional regulation of genes required for mesoderm differentiation, including itself. Indispensable for the formation of the notochord and the tail structure. Functions together with tbx16/spadetail in development of trunk and tail mesoderm. Functions by itself early in development to repress medial floor plate and promote notochord fate but at later times, functions together with tbx16/spadetail to promote medial floor plate formation. Acts in a parallel pathway to, but cooperates with, non-canonical wnt-signaling during tail formation. Required for the morphogenesis of Kupffer's vesicle and regulates left-right asymmetry. In Danio rerio (Zebrafish), this protein is T-box transcription factor T-A (tbxta).